The chain runs to 286 residues: Protein NipSnap homolog 2 (286 aa).

A mitochondrion-targeting transit peptide spans 1–23 (MAARVLRARGAAWAGGLLQRAAP).

This sequence belongs to the NipSnap family. Interacts with CALCOCO2/NDP52, NBR1, SQSTM1/p62, TAX1BP1 and WDFY3/ALFY. Interacts with ATG8 family proteins (MAP1LC3A, MAP1LC3B, MAP1LC3C, GABARAP, GABARAPL1 and GABARAPL2). Interacts with VDAC1. In terms of tissue distribution, widely expressed. Most abundant in heart and skeletal muscle.

It localises to the mitochondrion matrix. Protein involved in mitophagy by facilitating recruitment of the autophagy machinery required for clearance of damaged mitochondria. Accumulates on the mitochondria surface in response to mitochondrial depolarization and acts as a 'eat me' signal by recruiting proteins involved in selective autophagy, such as autophagy receptors (CALCOCO2/NDP52, NBR1, SQSTM1/p62, TAX1BP1 and WDFY3/ALFY) and ATG8 family proteins (MAP1LC3A, MAP1LC3B, MAP1LC3C, GABARAP, GABARAPL1 and GABARAPL2). This is Protein NipSnap homolog 2 from Homo sapiens (Human).